The chain runs to 140 residues: Small ribosomal subunit protein uS19 (140 aa).

This sequence belongs to the universal ribosomal protein uS19 family.

In terms of biological role, protein S19 forms a complex with S13 that binds strongly to the 16S ribosomal RNA. This chain is Small ribosomal subunit protein uS19, found in Methanocella arvoryzae (strain DSM 22066 / NBRC 105507 / MRE50).